Consider the following 120-residue polypeptide: MASRKEALARRASRVRRQIKAVANGRPRLSVHRSSKNIYAQIIDDVAGKTLASASTLEADLRSSLKTGADVAAAAVVGKLVAERGVKAGVKDVVFDRGAFIYHGRIKAVAEAAREGGLNF.

The protein belongs to the universal ribosomal protein uL18 family. In terms of assembly, part of the 50S ribosomal subunit; part of the 5S rRNA/L5/L18/L25 subcomplex. Contacts the 5S and 23S rRNAs.

This is one of the proteins that bind and probably mediate the attachment of the 5S RNA into the large ribosomal subunit, where it forms part of the central protuberance. This is Large ribosomal subunit protein uL18 from Agrobacterium fabrum (strain C58 / ATCC 33970) (Agrobacterium tumefaciens (strain C58)).